The chain runs to 223 residues: MHLSGDEIIIWQHGFVKLNLTIATTWALMLVLVGGSAFASRRLSNGMHRPRWQNVLEIIVGMARRQIEEVGLRRSMQYLPYLGTLFIFIAFSNLCTIIPGYEPPTGSLSTTAALAMSVFVAVPLFGIAESGLGGYLSTYVKPTPIMLPFNIISELSRTLALAVRLFGNIMSGSMILAILLTVTPFVFPVLMSVLGLLTGMVQAYIFSILATVYISAATRARKE.

Helical transmembrane passes span 20–40 (LTIA…AFAS), 78–98 (YLPY…CTII), 108–128 (LSTT…FGIA), 174–194 (MILA…MSVL), and 196–216 (LLTG…YISA).

The protein belongs to the ATPase A chain family. As to quaternary structure, F-type ATPases have 2 components, CF(1) - the catalytic core - and CF(0) - the membrane proton channel. CF(1) has five subunits: alpha(3), beta(3), gamma(1), delta(1), epsilon(1). CF(0) has four main subunits: a, b, b' and c.

It is found in the cell inner membrane. In terms of biological role, key component of the proton channel; it plays a direct role in the translocation of protons across the membrane. The sequence is that of ATP synthase subunit a 1 from Chlorobium luteolum (strain DSM 273 / BCRC 81028 / 2530) (Pelodictyon luteolum).